A 585-amino-acid chain; its full sequence is Pentatricopeptide repeat-containing protein At4g21170 (585 aa).

PPR repeat units lie at residues 152-186, 187-221, 222-247, 252-286, 287-321, 324-358, 360-394, 396-431, 432-466, 467-501, 502-534, and 538-572; these read LSVSLSLVLEYYALKGSHHNGLEVFGFMRRLRLSP, SQSAYNSLLGSLVKENQFRVALCLYSAMVRNGIVS, DELTWDLIAQILCEQGRSKSVFKLME, SCKIYTNLVECYSRNGEFDAVFSLIHEMDDKKLEL, SFCSYGCVLDDACRLGDAEFIDKVLCLMVEKKFVT, DSAVNDKIIERLCDMGKTFASEMLFRKACNGETVR, WDSTYGCMLKALSRKKRTKEAVDVYRMICRKGITV, DESCYIEFANALCRDDNSSEEEEELLVDVIKRGFVP, CTHKLSEVLASMCRKRRWKSAEKLLDSVMEMEVYF, DSFACGLLMERYCRSGKLEKALVLHEKIKKMKGSL, DVNAYNAVLDRLMMRQKEMVEEAVVVFEYMKEI, and NSKSFTIMIQGLCRVKEMKKAMRSHDEMLRLGLKP.

It belongs to the PPR family. P subfamily.

This chain is Pentatricopeptide repeat-containing protein At4g21170, found in Arabidopsis thaliana (Mouse-ear cress).